Reading from the N-terminus, the 592-residue chain is Solute carrier family 13 member 2 (592 aa).

The next 4 helical transmembrane spans lie at 13-33 (SYLI…LVPS), 53-73 (ALPL…MGIV), 86-106 (SNLL…WNLH), and 114-134 (LLIV…VTAF). The segment covering 165–177 (SSNVEEGSNNPTF) has biased composition (polar residues). The disordered stretch occupies residues 165–185 (SSNVEEGSNNPTFELQEPSPQ). Transmembrane regions (helical) follow at residues 221–241 (MSLC…TGTA), 274–294 (MVIL…GFNF), 324–344 (PMTF…LLWF), 371–391 (GTVA…FPGL), 450–470 (PLQS…VATF), 482–502 (IFLP…LYVM), 511–531 (LAFM…FGDL), and 545–565 (IIGV…LFSL).

This sequence belongs to the SLC13A/DASS transporter (TC 2.A.47) family. NADC subfamily. In terms of tissue distribution, expressed in kidney and intestine. In kidney expressed in the proximal tubule (at protein level).

The protein localises to the apical cell membrane. The catalysed reaction is succinate(out) + 3 Na(+)(out) = succinate(in) + 3 Na(+)(in). It carries out the reaction fumarate(out) + 3 Na(+)(out) = fumarate(in) + 3 Na(+)(in). It catalyses the reaction 2-oxoglutarate(out) + 3 Na(+)(out) = 2-oxoglutarate(in) + 3 Na(+)(in). With respect to regulation, li(+) decreases succinate transport in the presence of Na(+), by competing at one of the three cation binding sites. Its function is as follows. Low-affinity sodium-dicarboxylate cotransporter, that mediates the entry of citric acid cycle intermediates, such as succinate, citrate, fumarate and alpha-ketoglutarate (2-oxoglutarate) into the small intestine and renal proximal tubule. Transports the dicarboxylate into the cell with a probable stoichiometry of 3 Na(+) for 1 divalent dicarboxylate, rendering the process electrogenic. Citrate is transported in protonated form as a divalent anion, rather than the trivalent form which is normally found in blood. Has a critical role in renal dicarboxylate transport. The sequence is that of Solute carrier family 13 member 2 (SLC13A2) from Homo sapiens (Human).